We begin with the raw amino-acid sequence, 286 residues long: Phosphatidylserine decarboxylase proenzyme (286 aa).

Active-site charge relay system; for autoendoproteolytic cleavage activity residues include Asp90, His147, and Ser253. Ser253 (schiff-base intermediate with substrate; via pyruvic acid; for decarboxylase activity) is an active-site residue. Ser253 carries the pyruvic acid (Ser); by autocatalysis modification.

It belongs to the phosphatidylserine decarboxylase family. PSD-B subfamily. Prokaryotic type I sub-subfamily. As to quaternary structure, heterodimer of a large membrane-associated beta subunit and a small pyruvoyl-containing alpha subunit. It depends on pyruvate as a cofactor. In terms of processing, is synthesized initially as an inactive proenzyme. Formation of the active enzyme involves a self-maturation process in which the active site pyruvoyl group is generated from an internal serine residue via an autocatalytic post-translational modification. Two non-identical subunits are generated from the proenzyme in this reaction, and the pyruvate is formed at the N-terminus of the alpha chain, which is derived from the carboxyl end of the proenzyme. The autoendoproteolytic cleavage occurs by a canonical serine protease mechanism, in which the side chain hydroxyl group of the serine supplies its oxygen atom to form the C-terminus of the beta chain, while the remainder of the serine residue undergoes an oxidative deamination to produce ammonia and the pyruvoyl prosthetic group on the alpha chain. During this reaction, the Ser that is part of the protease active site of the proenzyme becomes the pyruvoyl prosthetic group, which constitutes an essential element of the active site of the mature decarboxylase.

Its subcellular location is the cell membrane. The catalysed reaction is a 1,2-diacyl-sn-glycero-3-phospho-L-serine + H(+) = a 1,2-diacyl-sn-glycero-3-phosphoethanolamine + CO2. It functions in the pathway phospholipid metabolism; phosphatidylethanolamine biosynthesis; phosphatidylethanolamine from CDP-diacylglycerol: step 2/2. In terms of biological role, catalyzes the formation of phosphatidylethanolamine (PtdEtn) from phosphatidylserine (PtdSer). In Pseudoalteromonas atlantica (strain T6c / ATCC BAA-1087), this protein is Phosphatidylserine decarboxylase proenzyme.